The primary structure comprises 600 residues: Methylenetetrahydrofolate reductase 2 (600 aa).

Glu-22 acts as the Proton donor/acceptor in catalysis. Residues 22–27 (EYFVPK) and 54–55 (TW) each bind NAD(+). Residues 54 to 55 (TW), His-84, 114 to 116 (RGD), 133 to 134 (YA), Tyr-156, Asp-171, and Lys-178 each bind FAD. Residue Asp-116 participates in substrate binding. Substrate contacts are provided by Gln-189 and Tyr-282.

The protein belongs to the methylenetetrahydrofolate reductase family. It depends on FAD as a cofactor.

It carries out the reaction (6S)-5-methyl-5,6,7,8-tetrahydrofolate + NADP(+) = (6R)-5,10-methylene-5,6,7,8-tetrahydrofolate + NADPH + H(+). It participates in one-carbon metabolism; tetrahydrofolate interconversion. This chain is Methylenetetrahydrofolate reductase 2 (MET13), found in Saccharomyces cerevisiae (strain ATCC 204508 / S288c) (Baker's yeast).